Here is a 213-residue protein sequence, read N- to C-terminus: 3,4-dihydroxy-2-butanone 4-phosphate synthase (213 aa).

D-ribulose 5-phosphate-binding positions include 37–38, Asp42, 150–154, and Glu174; these read RE and RAGHT. Mg(2+) is bound at residue Glu38. Position 153 (His153) interacts with Mg(2+).

Belongs to the DHBP synthase family. As to quaternary structure, homodimer. Mg(2+) serves as cofactor. Requires Mn(2+) as cofactor.

It carries out the reaction D-ribulose 5-phosphate = (2S)-2-hydroxy-3-oxobutyl phosphate + formate + H(+). The protein operates within cofactor biosynthesis; riboflavin biosynthesis; 2-hydroxy-3-oxobutyl phosphate from D-ribulose 5-phosphate: step 1/1. Functionally, catalyzes the conversion of D-ribulose 5-phosphate to formate and 3,4-dihydroxy-2-butanone 4-phosphate. This Wigglesworthia glossinidia brevipalpis protein is 3,4-dihydroxy-2-butanone 4-phosphate synthase.